The chain runs to 687 residues: Fimbrin-5 (687 aa).

An EF-hand domain is found at 7–74 (VLVSDPWLQS…KSVLDKSYPN (68 aa)). 4 Calponin-homology (CH) domains span residues 122–239 (ESEK…KIQM), 267–370 (LAPE…QHRN), 392–498 (SREE…RYTM), and 513–621 (EITD…YWSL). Actin-binding regions lie at residues 122–370 (ESEK…QHRN) and 392–621 (SREE…YWSL). Residues 628–687 (ESTVSEDATDDGDANSVAGEISNLSIDGASESSPTVQDQELLTKADNDEDEVDGENNKDA) are disordered. Polar residues predominate over residues 649–667 (SNLSIDGASESSPTVQDQE).

In terms of assembly, interacts with F-actin. In terms of tissue distribution, expressed in mature pollen.

It localises to the cytoplasm. The protein localises to the cytoskeleton. Cross-links actin filaments (F-actin) in a calcium independent manner. Induces the formation of actin bundles. Stabilizes and prevents F-actin depolymerization mediated by latrunculin B (LatB). This chain is Fimbrin-5, found in Arabidopsis thaliana (Mouse-ear cress).